The chain runs to 400 residues: MASEKPIVVVTCTAPVNIAVVKYWGKRDEELILPINSSLSVTLHQDQLKTTTTAAISRDFTEDRIWLNGREEDMGHPRLQACLREIRRLARKRRSDGHEDPLPLSLSYKVHVASENNFPTAAGLASSAAGYACLAYTLARVYGVDSDLSEVARRGSGSACRSLYGGFVEWQMGERPDGKDSVACQVAPESHWPELRVLILVVSAERKPMGSTAGMQTSVETSALLKFRAEALVPPRMAEMTRCIRERNFQAFGQLTMKDSNQFHATCLDTFPPISYLSDTSRRIIQLVHRFNAHHGQTKVAYTFDAGPNAVVFTLDDTVAEFVAAVRHSFPPESNGDKFLKGLPVEPVLLSDELKAVLGMDPVPGSIRYIIATQVGPGPQVLDDPGAHLLGPDGLPKPAA.

Alanine 2 carries the N-acetylalanine modification. Residues 23 to 26 (YWGK), arginine 78, 156 to 161 (SGSACR), and threonine 212 contribute to the (R)-5-diphosphomevalonate site.

This sequence belongs to the diphosphomevalonate decarboxylase family. Homodimer.

It localises to the cytoplasm. The enzyme catalyses (R)-5-diphosphomevalonate + ATP = isopentenyl diphosphate + ADP + phosphate + CO2. The protein operates within steroid biosynthesis; cholesterol biosynthesis. In terms of biological role, catalyzes the ATP dependent decarboxylation of (R)-5-diphosphomevalonate to form isopentenyl diphosphate (IPP). Functions in the mevalonate (MVA) pathway leading to isopentenyl diphosphate (IPP), a key precursor for the biosynthesis of isoprenoids and sterol synthesis. This Bos taurus (Bovine) protein is Diphosphomevalonate decarboxylase (MVD).